A 328-amino-acid polypeptide reads, in one-letter code: Telomere-binding protein cav (328 aa).

Residues 107-320 are required for binding to Su(var)205; the sequence is RRKMVQPYPE…NISLQNSGSE (214 aa). The tract at residues 139 to 228 is disordered; sequence DRWQKQKSQN…EFQTEHTDCP (90 aa). Composition is skewed to polar residues over residues 144–167 and 180–189; these read QKSQ…QQDS and ANTNRYSVSQ. Short sequence motifs (su(var)205-binding Pro-containing repeat) lie at residues 228-232 and 281-287; these read PETQM and PETETNE. The span at 295–319 shows a compositional bias: polar residues; it reads INSESMSIGPSIDSEGNISLQNSGS. The disordered stretch occupies residues 295-328; that stretch reads INSESMSIGPSIDSEGNISLQNSGSEPIDVDSMA.

As to quaternary structure, interacts (via C-terminus) with Su(var)205 dimer (via hinge and chromoshadow domain) and with moi to form the terminin, telomere-capping, complex. Interacts with HP6, which is also part of the terminin complex.

Its subcellular location is the nucleus. The protein localises to the chromosome. It localises to the telomere. Binds to chromosome ends in a sequence-dependent manner and is required for telomere capping. This is Telomere-binding protein cav from Drosophila erecta (Fruit fly).